Consider the following 160-residue polypeptide: Transcription elongation factor GreB (160 aa).

The protein belongs to the GreA/GreB family. GreB subfamily.

In terms of biological role, necessary for efficient RNA polymerase transcription elongation past template-encoded arresting sites. The arresting sites in DNA have the property of trapping a certain fraction of elongating RNA polymerases that pass through, resulting in locked ternary complexes. Cleavage of the nascent transcript by cleavage factors such as GreA or GreB allows the resumption of elongation from the new 3'terminus. GreB releases sequences of up to 9 nucleotides in length. The protein is Transcription elongation factor GreB of Vibrio vulnificus (strain YJ016).